Here is a 77-residue protein sequence, read N- to C-terminus: U10-lycotoxin-Ls1b (77 aa).

An N-terminal signal peptide occupies residues M1 to A20. The propeptide occupies E21 to R26.

The protein belongs to the neurotoxin 19 (CSTX) family. 09 (U10-Lctx) subfamily. Post-translationally, contains 4 disulfide bonds. Expressed by the venom gland.

It localises to the secreted. The protein is U10-lycotoxin-Ls1b of Lycosa singoriensis (Wolf spider).